Consider the following 757-residue polypeptide: Chloride channel protein C (757 aa).

Residues 1-96 (MGSSLNKPLS…LHLKKTFGKW (96 aa)) lie on the Cytoplasmic side of the membrane. Helical transmembrane passes span 97–117 (IICL…KMVV), 141–161 (FLTF…MVIV), 196–216 (IVSL…GPMI), 253–273 (FISI…IGGV), 292–312 (TFFT…GIGS), 337–357 (LLCF…FVFL), 378–398 (FEAL…SFIF), 462–482 (LLVF…LWVA), 484–504 (GLFV…GQTI), 506–526 (MWFT…AMMA), and 535–555 (IVVI…IILA). 2 consecutive CBS domains span residues 600–667 (MSKN…TGEE) and 710–757 (MNSS…NDLF).

Belongs to the chloride channel (TC 2.A.49) family.

The protein localises to the membrane. Functionally, voltage-gated chloride channel. Chloride channels may have several functions including the regulation of cell volume, membrane potential stabilization and signal transduction. This is Chloride channel protein C (clcC) from Dictyostelium discoideum (Social amoeba).